The primary structure comprises 192 residues: Elongation factor P (192 aa).

This sequence belongs to the elongation factor P family.

It localises to the cytoplasm. It functions in the pathway protein biosynthesis; polypeptide chain elongation. Functionally, involved in peptide bond synthesis. Stimulates efficient translation and peptide-bond synthesis on native or reconstituted 70S ribosomes in vitro. Probably functions indirectly by altering the affinity of the ribosome for aminoacyl-tRNA, thus increasing their reactivity as acceptors for peptidyl transferase. The sequence is that of Elongation factor P from Borrelia garinii subsp. bavariensis (strain ATCC BAA-2496 / DSM 23469 / PBi) (Borreliella bavariensis).